The primary structure comprises 470 residues: Desmin (470 aa).

The head stretch occupies residues 2 to 108; sequence SQAYSSSQRV…QEFLTTRTNE (107 aa). A Phosphoserine; by CDK1 modification is found at Ser7. Ser12 bears the Phosphoserine; by AURKB mark. At Arg16 the chain carries Omega-N-methylarginine. Thr17 carries the post-translational modification Phosphothreonine; by AURKB and ROCK1. Ser28 is subject to Phosphoserine; by CDK1. At Ser31 the chain carries Phosphoserine. Phosphoserine; by CDK1 is present on Ser32. The residue at position 37 (Arg37) is an Asymmetric dimethylarginine; alternate. Omega-N-methylarginine; alternate is present on Arg37. Ser45 is subject to Phosphoserine. An ADP-ribosylarginine modification is found at Arg58. Ser60 is modified (phosphoserine; by AURKB). Ser68 carries the post-translational modification Phosphoserine. Arg70 is modified (omega-N-methylarginine). Phosphothreonine; by ROCK1 is present on residues Thr76 and Thr77. Phosphoserine is present on Ser81. The region spanning 108-416 is the IF rod domain; it reads EKVELQELND…KLLEGEESRI (309 aa). A coil 1A region spans residues 109–141; the sequence is KVELQELNDRFANYIEKVRFLEQQNAALAAEVN. Residues 142–151 are linker 1; the sequence is RLKGREPTRV. A coil 1B region spans residues 152 to 252; sequence AELYEEELRE…HEEEIRELQA (101 aa). The linker 12 stretch occupies residues 253-268; sequence QLQEQQVQVEMDMSKP. Residues 268–415 are interaction with NEB; the sequence is PDLTAALRDI…RKLLEGEESR (148 aa). Residues 269–287 are coil 2A; sequence DLTAALRDIRAQYETIAAK. The tract at residues 288–295 is linker 2; the sequence is NISEAEEW. A phosphoserine mark is found at Ser290, Ser358, Ser361, and Ser424. A coil 2B region spans residues 296–412; sequence YKSKVSDLTQ…ATYRKLLEGE (117 aa). The interval 413–470 is tail; the sequence is ESRINLPIQTYSALNFRETSPEQRGSEVHTKKTVMIKTIETRDGEVVSEATQQQHEVL. Residues 438–453 form an interaction with CRYAB region; the sequence is SEVHTKKTVMIKTIET.

The protein belongs to the intermediate filament family. In terms of assembly, homomer. Interacts with DST. Interacts with MTM1. Interacts with EPPK1; interaction is dependent of higher-order structure of intermediate filament. Interacts with CRYAB. Interacts with NEB (via nebulin repeats 160-164). Interacts (via rod region) with NEBL (via nebulin repeats 1-5). Interacts with ASB2 isoform 1; the interaction targets DES for proteasomal degradation. Interacts with PLEC isoform 1C. Interacts with PKP1. Interacts with FLII. Post-translationally, ADP-ribosylation prevents ability to form intermediate filaments. In terms of processing, phosphorylation at Ser-7, Ser-28 and Ser-32 by CDK1, phosphorylation at Ser-60 by AURKB and phosphorylation at Thr-76 by ROCK1 contribute to efficient separation of desmin intermediate filaments during mitosis. Ubiquitination by a SCF-like complex containing ASB2 isoform 1 leads to proteasomal degradation.

The protein resides in the cytoplasm. Its subcellular location is the myofibril. It is found in the sarcomere. The protein localises to the z line. It localises to the cell membrane. The protein resides in the sarcolemma. Its subcellular location is the nucleus. It is found in the cell tip. The protein localises to the nucleus envelope. Functionally, muscle-specific type III intermediate filament essential for proper muscular structure and function. Plays a crucial role in maintaining the structure of sarcomeres, inter-connecting the Z-disks and forming the myofibrils, linking them not only to the sarcolemmal cytoskeleton, but also to the nucleus and mitochondria, thus providing strength for the muscle fiber during activity. In adult striated muscle they form a fibrous network connecting myofibrils to each other and to the plasma membrane from the periphery of the Z-line structures. May act as a sarcomeric microtubule-anchoring protein: specifically associates with detyrosinated tubulin-alpha chains, leading to buckled microtubules and mechanical resistance to contraction. Required for nuclear membrane integrity, via anchoring at the cell tip and nuclear envelope, resulting in maintenance of microtubule-derived intracellular mechanical forces. Contributes to the transcriptional regulation of the NKX2-5 gene in cardiac progenitor cells during a short period of cardiomyogenesis and in cardiac side population stem cells in the adult. Plays a role in maintaining an optimal conformation of nebulette (NEB) on heart muscle sarcomeres to bind and recruit cardiac alpha-actin. The chain is Desmin (DES) from Homo sapiens (Human).